The following is a 107-amino-acid chain: uncharacterized protein (107 aa).

A helical transmembrane segment spans residues 9 to 31 (AAAIITAPTILAMMSTVLRALIF).

The protein resides in the membrane. This is an uncharacterized protein from Archaeoglobus fulgidus (strain ATCC 49558 / DSM 4304 / JCM 9628 / NBRC 100126 / VC-16).